The primary structure comprises 128 residues: Probable heavy metal-dependent transcriptional regulator HI_0293 (128 aa).

In terms of domain architecture, HTH merR-type spans 1–69; the sequence is MNISEAAKLV…LHQIAQLLAL (69 aa). The H-T-H motif DNA-binding region spans 4–23; the sequence is SEAAKLVGLSTKQIRDYEKM.

It localises to the cytoplasm. Functionally, could be a copper-dependent transcriptional activator of the ATPase HI_0290. This Haemophilus influenzae (strain ATCC 51907 / DSM 11121 / KW20 / Rd) protein is Probable heavy metal-dependent transcriptional regulator HI_0293.